Reading from the N-terminus, the 1412-residue chain is DNA-directed RNA polymerase subunit beta' (1412 aa).

The Zn(2+) site is built by C70, C72, C85, and C88. The Mg(2+) site is built by D460, D462, and D464. Zn(2+) contacts are provided by C819, C893, C900, and C903. Positions 1391 to 1412 are disordered; it reads AEESFEFGTPETPAAEQQHSGE.

Belongs to the RNA polymerase beta' chain family. In terms of assembly, the RNAP catalytic core consists of 2 alpha, 1 beta, 1 beta' and 1 omega subunit. When a sigma factor is associated with the core the holoenzyme is formed, which can initiate transcription. It depends on Mg(2+) as a cofactor. Zn(2+) is required as a cofactor.

The catalysed reaction is RNA(n) + a ribonucleoside 5'-triphosphate = RNA(n+1) + diphosphate. Its function is as follows. DNA-dependent RNA polymerase catalyzes the transcription of DNA into RNA using the four ribonucleoside triphosphates as substrates. This is DNA-directed RNA polymerase subunit beta' from Paraburkholderia xenovorans (strain LB400).